The primary structure comprises 146 residues: Large ribosomal subunit protein uL15 (146 aa).

A compositionally biased stretch (basic and acidic residues) spans 1-18; the sequence is MKLHELKPSEGSRKERNR. The interval 1 to 50 is disordered; it reads MKLHELKPSEGSRKERNRVGRGTGSGNGKTSGRGHKGQKARSGGGVRLGF. The segment covering 21–31 has biased composition (gly residues); that stretch reads RGTGSGNGKTS.

The protein belongs to the universal ribosomal protein uL15 family. As to quaternary structure, part of the 50S ribosomal subunit.

Binds to the 23S rRNA. The protein is Large ribosomal subunit protein uL15 of Listeria monocytogenes serotype 4b (strain CLIP80459).